We begin with the raw amino-acid sequence, 318 residues long: CRISPR-associated endonuclease Cas1 1 (318 aa).

Positions 157, 222, and 237 each coordinate Mn(2+).

It belongs to the CRISPR-associated endonuclease Cas1 family. Homodimer, forms a heterotetramer with a Cas2 homodimer. The cofactor is Mg(2+). Mn(2+) is required as a cofactor.

Its function is as follows. CRISPR (clustered regularly interspaced short palindromic repeat), is an adaptive immune system that provides protection against mobile genetic elements (viruses, transposable elements and conjugative plasmids). CRISPR clusters contain spacers, sequences complementary to antecedent mobile elements, and target invading nucleic acids. CRISPR clusters are transcribed and processed into CRISPR RNA (crRNA). Acts as a dsDNA endonuclease. Involved in the integration of spacer DNA into the CRISPR cassette. This is CRISPR-associated endonuclease Cas1 1 from Francisella tularensis subsp. novicida (strain U112).